The primary structure comprises 283 residues: Adenosyl-chloride synthase (283 aa).

Residues D11, 70 to 72, and 128 to 131 each bind substrate; these read YVY and TWYG. G131 provides a ligand contact to chloride.

This sequence belongs to the SAM hydrolase / SAM-dependent halogenase family. In terms of assembly, homotrimer.

It catalyses the reaction chloride + S-adenosyl-L-methionine = 5'-chloro-5'-deoxyadenosine + L-methionine. Functionally, involved in the biosynthesis of the proteosome inhibitor salinosporamide A (SalA). Catalyzes the halogenation of S-adenosyl-L-methionine (SAM) with chloride to generate 5'-chloro-5'-deoxyadenosine (5'-CIDA) and L-methionine. It can also use bromide and iodide, producing halogenated 5'-deoxyadenosine (5'-XDA) and L-methionine, however no halogenase activity is detected in the presence of fluoride. This chain is Adenosyl-chloride synthase, found in Salinispora tropica (strain ATCC BAA-916 / DSM 44818 / JCM 13857 / NBRC 105044 / CNB-440).